Reading from the N-terminus, the 920-residue chain is 2-oxoglutarate dehydrogenase E1 component (920 aa).

The protein belongs to the alpha-ketoglutarate dehydrogenase family. In terms of assembly, homodimer. Part of the 2-oxoglutarate dehydrogenase (OGDH) complex composed of E1 (2-oxoglutarate dehydrogenase), E2 (dihydrolipoamide succinyltransferase) and E3 (dihydrolipoamide dehydrogenase); the complex contains multiple copies of the three enzymatic components (E1, E2 and E3). The cofactor is thiamine diphosphate.

The catalysed reaction is N(6)-[(R)-lipoyl]-L-lysyl-[protein] + 2-oxoglutarate + H(+) = N(6)-[(R)-S(8)-succinyldihydrolipoyl]-L-lysyl-[protein] + CO2. E1 component of the 2-oxoglutarate dehydrogenase (OGDH) complex which catalyzes the decarboxylation of 2-oxoglutarate, the first step in the conversion of 2-oxoglutarate to succinyl-CoA and CO(2). The polypeptide is 2-oxoglutarate dehydrogenase E1 component (Leptospira interrogans serogroup Icterohaemorrhagiae serovar copenhageni (strain Fiocruz L1-130)).